We begin with the raw amino-acid sequence, 534 residues long: Chaperonin GroEL (534 aa).

Residues Thr-29–Pro-32, Asp-86–Thr-90, Gly-413, and Asp-494 contribute to the ATP site.

The protein belongs to the chaperonin (HSP60) family. In terms of assembly, forms a cylinder of 14 subunits composed of two heptameric rings stacked back-to-back. Interacts with the co-chaperonin GroES.

It is found in the cytoplasm. The catalysed reaction is ATP + H2O + a folded polypeptide = ADP + phosphate + an unfolded polypeptide.. Together with its co-chaperonin GroES, plays an essential role in assisting protein folding. The GroEL-GroES system forms a nano-cage that allows encapsulation of the non-native substrate proteins and provides a physical environment optimized to promote and accelerate protein folding. The polypeptide is Chaperonin GroEL (Mycoplasmoides gallisepticum (strain R(low / passage 15 / clone 2)) (Mycoplasma gallisepticum)).